A 459-amino-acid polypeptide reads, in one-letter code: ATP synthase subunit beta (459 aa).

148-155 (GGAGVGKT) serves as a coordination point for ATP.

Belongs to the ATPase alpha/beta chains family. In terms of assembly, F-type ATPases have 2 components, CF(1) - the catalytic core - and CF(0) - the membrane proton channel. CF(1) has five subunits: alpha(3), beta(3), gamma(1), delta(1), epsilon(1). CF(0) has three main subunits: a(1), b(2) and c(9-12). The alpha and beta chains form an alternating ring which encloses part of the gamma chain. CF(1) is attached to CF(0) by a central stalk formed by the gamma and epsilon chains, while a peripheral stalk is formed by the delta and b chains.

Its subcellular location is the cell inner membrane. The catalysed reaction is ATP + H2O + 4 H(+)(in) = ADP + phosphate + 5 H(+)(out). Functionally, produces ATP from ADP in the presence of a proton gradient across the membrane. The catalytic sites are hosted primarily by the beta subunits. In Vesicomyosocius okutanii subsp. Calyptogena okutanii (strain HA), this protein is ATP synthase subunit beta.